A 227-amino-acid chain; its full sequence is DNA repair protein RecO (227 aa).

This sequence belongs to the RecO family.

In terms of biological role, involved in DNA repair and RecF pathway recombination. This chain is DNA repair protein RecO, found in Pseudomonas putida (strain ATCC 47054 / DSM 6125 / CFBP 8728 / NCIMB 11950 / KT2440).